Consider the following 386-residue polypeptide: WD repeat-containing protein 89 (386 aa).

WD repeat units follow at residues 21–65, 68–107, 112–156, 167–207, 213–253, and 318–357; these read KEPT…LLRE, GSPG…EKPV, GYPS…QDLS, THSD…EEDA, NSVS…TDEP, and GHAA…KTFT.

This chain is WD repeat-containing protein 89 (Wdr89), found in Mus musculus (Mouse).